The sequence spans 481 residues: 4-hydroxyphenylacetate 3-monooxygenase oxygenase component (481 aa).

Substrate is bound by residues 100–104 and His-142; that span reads RSPDY. Residues 142-144, 148-151, and Thr-185 contribute to the FAD site; these read HAL and QVNR. 197 to 198 is a binding site for substrate; sequence ST. 444–447 contributes to the FAD binding site; it reads DPVR.

This sequence belongs to the FADH(2)-utilizing monooxygenase family. Homotetramer consisting of a dimer of dimers. 4-HPA 3-monooxygenase consists of a reductase component HpaC and an oxygenase component HpaB.

The catalysed reaction is 4-hydroxyphenylacetate + FADH2 + O2 = 3,4-dihydroxyphenylacetate + FAD + H2O + H(+). It functions in the pathway aromatic compound metabolism; 4-hydroxyphenylacetate degradation; pyruvate and succinate semialdehyde from 4-hydroxyphenylacetate: step 1/7. In terms of biological role, utilizes FADH(2) supplied by HpaC, to catalyze the hydroxylation of 4-hydroxyphenylacetic acid, leading to the production of 3,4-dihydroxyphenylacetic acid (DHPA). In Thermus thermophilus (strain ATCC 27634 / DSM 579 / HB8), this protein is 4-hydroxyphenylacetate 3-monooxygenase oxygenase component.